The chain runs to 283 residues: Non-selective voltage-gated ion channel VDAC3 (283 aa).

Cysteine 2 bears the N-acetylcysteine mark. Residue threonine 4 is modified to Phosphothreonine. Lysine 12, lysine 15, and lysine 20 each carry N6-acetyllysine. A run of 2 beta stranded transmembrane segments spans residues 26–35 and 39–47; these read MVKIDLKTKS and VEFSTSGHA. Threonine 33 carries the post-translational modification Phosphothreonine. Lysine 53 participates in a covalent cross-link: Glycyl lysine isopeptide (Lys-Gly) (interchain with G-Cter in ubiquitin). The next 3 membrane-spanning stretches (beta stranded) occupy residues 54–64, 69–76, and 80–89; these read ASGNLETKYKV, LIFTQKWN, and TLGTEISWEN. Lysine 90 carries the post-translational modification N6-acetyllysine. The chain crosses the membrane as a beta stranded span at residues 95–104; the sequence is LKLTVDTIFV. Residues lysine 109 and lysine 110 each participate in a glycyl lysine isopeptide (Lys-Gly) (interchain with G-Cter in ubiquitin) cross-link. 10 beta stranded membrane-spanning segments follow: residues 111 to 120, 123 to 130, 137 to 145, 150 to 158, 163 to 175, 178 to 185, 189 to 198, 202 to 211, 218 to 227, and 231 to 238; these read SGKLKASYRR, FSVGSKVD, TIYGWAVLA, LAGYQMSFD, KLCQ…GYKA, FQLHTHVN, EFGGSIYQRV, IETSINLAWT, RFGIAAKYRL, and TSLSAKVN. Serine 241 carries the phosphoserine modification. Residues 242–244 and 260–264 each bind NAD(+); these read LIG and SALVD. 2 beta stranded membrane-spanning segments follow: residues 242–251 and 254–263; these read LIGLGYTQSL and GVKLTLSALV. The residue at position 266 (lysine 266) is an N6-acetyllysine; alternate. A Glycyl lysine isopeptide (Lys-Gly) (interchain with G-Cter in ubiquitin); alternate cross-link involves residue lysine 266. Residues 273–282 traverse the membrane as a beta stranded segment; sequence HKVGLGFELE.

Belongs to the eukaryotic mitochondrial porin family. As to quaternary structure, interacts with ARMC12 in a TBC1D21-dependent manner. Interacts with MISFA. Post-translationally, ubiquitinated by PRKN during mitophagy, leading to its degradation and enhancement of mitophagy. Deubiquitinated by USP30. In terms of tissue distribution, isoform 1 is widely expressed with strong expression in atrium and ascitic tumor, lower levels in brain and very low levels in liver and kidney. Isoform 2 is also widely expressed with highest levels in brain but no expression in kidney. Also expressed in flagella of epididymal sperm.

It is found in the mitochondrion outer membrane. Its subcellular location is the membrane. It carries out the reaction chloride(in) = chloride(out). The enzyme catalyses K(+)(in) = K(+)(out). Functionally, non-selective voltage-gated ion channel that mediates the transport of anions and cations through the mitochondrion outer membrane and plasma membrane. Forms a high-conducting channel with a stable open state and a voltage-induced closure with a mild preference for anions over cations. Involved in male fertility and sperm mitochondrial sheath formation. This Rattus norvegicus (Rat) protein is Non-selective voltage-gated ion channel VDAC3.